We begin with the raw amino-acid sequence, 430 residues long: MAAIVIVGAQWGDEGKGKATDILGGLVDYVVKPNGGNNAGHTVVVGGEKYELKLLPAGVLSETATPILGNGVVINLEALFEEIDGLEARGADASRLRISANAHLVAPYHQVMDRVQERFLGKRAIGTTGRGIGPTYADKVSRVGIRVQDIFDESILRQKVESALDYKNQVLVKMYNRKAIVAEEIVQYFLSYADRLRPMVIDATLVLNEALDQGKHVLMEGGQATMLDVDHGTYPFVTSSNPTAGGASVGSGIGPTKITSSLGIIKAYTTRVGAGPFPTELFDKWGEYLQTVGGEVGVNTGRKRRCGWYDSVIARYASRVNGFTDYFLTKLDVLTGIGEIPICVAYDVDGVRHDEMPLTQSEFHHATPIFETMPAWDEDITDCKTFEDLPQKAQDYVRRLEELSGARFSYIGVGPGRDQTIVLHDVLADN.

GTP-binding positions include 12–18 (GDEGKGK) and 40–42 (GHT). The Proton acceptor role is filled by D13. Positions 13 and 40 each coordinate Mg(2+). Residues 13-16 (DEGK), 38-41 (NAGH), T128, R142, Q223, T238, and R302 contribute to the IMP site. H41 acts as the Proton donor in catalysis. Substrate is bound at residue 298–304 (VNTGRKR). Residues R304, 330–332 (KLD), and 412–414 (GVG) each bind GTP.

Belongs to the adenylosuccinate synthetase family. As to quaternary structure, homodimer. The cofactor is Mg(2+).

It is found in the cytoplasm. It carries out the reaction IMP + L-aspartate + GTP = N(6)-(1,2-dicarboxyethyl)-AMP + GDP + phosphate + 2 H(+). It functions in the pathway purine metabolism; AMP biosynthesis via de novo pathway; AMP from IMP: step 1/2. Plays an important role in the de novo pathway of purine nucleotide biosynthesis. Catalyzes the first committed step in the biosynthesis of AMP from IMP. The sequence is that of Adenylosuccinate synthetase from Corynebacterium glutamicum (strain ATCC 13032 / DSM 20300 / JCM 1318 / BCRC 11384 / CCUG 27702 / LMG 3730 / NBRC 12168 / NCIMB 10025 / NRRL B-2784 / 534).